The sequence spans 90 residues: Small ribosomal subunit protein bS16 (90 aa).

Belongs to the bacterial ribosomal protein bS16 family.

The protein is Small ribosomal subunit protein bS16 of Streptococcus pneumoniae (strain Hungary19A-6).